Here is an 897-residue protein sequence, read N- to C-terminus: Isoleucine--tRNA ligase (897 aa).

Positions 59–69 match the 'HIGH' region motif; sequence PYANGDIHVGH. E552 contributes to the L-isoleucyl-5'-AMP binding site. Residues 593–597 carry the 'KMSKS' region motif; the sequence is KMSKS. An ATP-binding site is contributed by K596. Zn(2+)-binding residues include C872, C875, C890, and C893.

It belongs to the class-I aminoacyl-tRNA synthetase family. IleS type 1 subfamily. As to quaternary structure, monomer. Zn(2+) serves as cofactor.

It localises to the cytoplasm. It catalyses the reaction tRNA(Ile) + L-isoleucine + ATP = L-isoleucyl-tRNA(Ile) + AMP + diphosphate. Functionally, catalyzes the attachment of isoleucine to tRNA(Ile). As IleRS can inadvertently accommodate and process structurally similar amino acids such as valine, to avoid such errors it has two additional distinct tRNA(Ile)-dependent editing activities. One activity is designated as 'pretransfer' editing and involves the hydrolysis of activated Val-AMP. The other activity is designated 'posttransfer' editing and involves deacylation of mischarged Val-tRNA(Ile). The sequence is that of Isoleucine--tRNA ligase from Mycoplasmoides gallisepticum (strain R(low / passage 15 / clone 2)) (Mycoplasma gallisepticum).